We begin with the raw amino-acid sequence, 226 residues long: CASP-like protein 2BC1 (226 aa).

Residues 1-37 lie on the Cytoplasmic side of the membrane; that stretch reads MRKHIDIVFSRLSGPILNPPPDNNVIPKTDRKLRITE. A helical transmembrane segment spans residues 38–58; that stretch reads VILRFAVVIFALVSAIMVGTA. Over 59 to 78 the chain is Extracellular; the sequence is SGTRDLGGGIRIHAHFTLLK. A helical transmembrane segment spans residues 79-99; that stretch reads TLPFLVIVDGILAVYSLLQGL. Topologically, residues 100 to 114 are cytoplasmic; sequence RCFLSLYMRHILLNK. A helical membrane pass occupies residues 115-135; sequence ALAWTIFCCDQALAYVIFAAA. At 136–170 the chain is on the extracellular side; that stretch reads ASTAETAYISEQGLDELQWIKVCMFFRAYCFKSGA. The chain crosses the membrane as a helical span at residues 171-191; sequence GMINAFLAALCMVFVSGMSVF. Over 192–226 the chain is Cytoplasmic; that stretch reads HLFRLYGEKRAYGHIAEQVVISEEAAERRNSLNGI.

The protein belongs to the Casparian strip membrane proteins (CASP) family. In terms of assembly, homodimer and heterodimers.

The protein resides in the cell membrane. This Picea sitchensis (Sitka spruce) protein is CASP-like protein 2BC1.